Here is a 533-residue protein sequence, read N- to C-terminus: Intestinal-type alkaline phosphatase (533 aa).

The first 19 residues, 1-19 (MQGACVLLLLGLHLQLSLG), serve as a signal peptide directing secretion. Aspartate 61 serves as a coordination point for Mg(2+). Positions 61 and 111 each coordinate Zn(2+). The Phosphoserine intermediate role is filled by serine 111. A disulfide bond links cysteine 140 and cysteine 202. Position 174 (serine 174) interacts with Mg(2+). A Ca(2+)-binding site is contributed by glutamate 235. N-linked (GlcNAc...) asparagine glycosylation occurs at asparagine 268. Phenylalanine 288, glutamate 289, and aspartate 304 together coordinate Ca(2+). Glutamate 330 is a binding site for Mg(2+). Zn(2+) is bound by residues aspartate 335, histidine 339, aspartate 376, and histidine 377. Asparagine 429 carries N-linked (GlcNAc...) asparagine glycosylation. Residue histidine 451 participates in Zn(2+) binding. Cysteine 486 and cysteine 493 are joined by a disulfide. The GPI-anchor amidated aspartate moiety is linked to residue aspartate 506. Residues 507–533 (AAHLAASPPPLALLAGAMLLLLAPTLY) constitute a propeptide, removed in mature form.

The protein belongs to the alkaline phosphatase family. Homodimer. Requires Mg(2+) as cofactor. Zn(2+) serves as cofactor. The cofactor is Ca(2+).

The protein resides in the cell membrane. The enzyme catalyses a phosphate monoester + H2O = an alcohol + phosphate. Functionally, alkaline phosphatase that can hydrolyze various phosphate compounds. This Bos taurus (Bovine) protein is Intestinal-type alkaline phosphatase (ALPI).